The sequence spans 525 residues: Mannuronan C5-epimerase AlgG (525 aa).

The signal sequence occupies residues 1–29; sequence MNVQRKLASTQLKPVLLGVLLATSAWSQA. PbH1 repeat units lie at residues 287–309, 311–334, 336–358, 360–382, and 383–405; these read ADDVVLKGNTYRDNIIYGIDPHD, SERLVIAENHVYGTKKKHGIIVSR, VNNSWIINNRTHDNKLSGIVLDR, SEHNLVAYNEVYQNHSDGITLYE, and SSNNLIWGNRLINNARHGIRMRN. The active-site Proton acceptor is the His308.

This sequence belongs to the D-mannuronate C5-epimerase family.

The protein resides in the periplasm. The enzyme catalyses [(1-&gt;4)-beta-D-mannuronosyl](n) = [alginate](n). It functions in the pathway glycan biosynthesis; alginate biosynthesis. Inhibited by zinc. Functionally, catalyzes the epimerization of beta-D-mannuronate to alpha-L-guluronate during the synthesis of the linear polysaccharide alginate. In addition, is part of a periplasmic protein complex that protects alginate from degradation by AlgL by channeling the newly formed alginate polymer through a scaffold that transfers the alginate polymer through the periplasmic space to the outer membrane secretin AlgE. This chain is Mannuronan C5-epimerase AlgG, found in Azotobacter vinelandii.